A 301-amino-acid polypeptide reads, in one-letter code: Probable alpha-L-glutamate ligase (301 aa).

Positions 104-287 constitute an ATP-grasp domain; it reads LQLLSRKGIG…VAGMIYEFIE (184 aa). ATP-binding positions include lysine 141, 178 to 179, aspartate 187, and 211 to 213; these read EF and RSN. Mg(2+) contacts are provided by aspartate 248, glutamate 260, and asparagine 262. The Mn(2+) site is built by aspartate 248, glutamate 260, and asparagine 262.

It belongs to the RimK family. Mg(2+) serves as cofactor. It depends on Mn(2+) as a cofactor.

The protein is Probable alpha-L-glutamate ligase of Vibrio vulnificus (strain CMCP6).